A 1531-amino-acid polypeptide reads, in one-letter code: Protein turtle (1531 aa).

The Extracellular portion of the chain corresponds to 1 to 858; that stretch reads MGVCADLGSH…PARVKHKAIT (858 aa). Positions 19 to 44 are disordered; it reads QHNTEKSKEQQQQSQPLEIPEQRASK. Ig-like C2-type domains follow at residues 132-243, 253-340, 344-436, 440-529, and 536-624; these read PEDA…KNGT, PRFS…ARVI, GAVI…AYLS, PAKV…GVMD, and PAFT…MAVT. 5 disulfides stabilise this stretch: C150-C227, C275-C324, C366-C419, C462-C513, and C558-C611. Fibronectin type-III domains lie at 632–728 and 760–851; these read QPHA…TLED and PPRN…VPAR. The chain crosses the membrane as a helical span at residues 859–879; the sequence is AGVVGGILFFIVAIILSVCAV. The Cytoplasmic segment spans residues 880–1531; it reads KICNKRKRRK…QAMQQMESVC (652 aa). 2 disordered regions span residues 1248–1269 and 1318–1395; these read EETRRQQQQKQHPLEDHFVPLQ and NLNL…SYPR. Residues 1333–1349 are compositionally biased toward low complexity; the sequence is SPESRSSSSGFGSKNTS. Over residues 1380 to 1389 the composition is skewed to polar residues; sequence QQAQGQTPHG.

Belongs to the immunoglobulin superfamily. Turtle family. Interacts with bdl. In terms of tissue distribution, exclusively expressed in the central nervous system.

The protein resides in the membrane. In terms of biological role, essential protein that plays a role in the establishment of coordinated motor control. In the developing eye, involved in axonal targeting of the R7 photoreceptor. This Drosophila melanogaster (Fruit fly) protein is Protein turtle (tutl).